The chain runs to 323 residues: tRNA dimethylallyltransferase (323 aa).

Residue 32–39 coordinates ATP; that stretch reads GPTASGKS. 34–39 contacts substrate; the sequence is TASGKS. An interaction with substrate tRNA region spans residues 57 to 60; it reads DSMQ.

Belongs to the IPP transferase family. In terms of assembly, monomer. Mg(2+) serves as cofactor.

It catalyses the reaction adenosine(37) in tRNA + dimethylallyl diphosphate = N(6)-dimethylallyladenosine(37) in tRNA + diphosphate. Its function is as follows. Catalyzes the transfer of a dimethylallyl group onto the adenine at position 37 in tRNAs that read codons beginning with uridine, leading to the formation of N6-(dimethylallyl)adenosine (i(6)A). This is tRNA dimethylallyltransferase from Rhodopseudomonas palustris (strain BisB5).